The chain runs to 1865 residues: Dedicator of cytokinesis protein 1 (1865 aa).

Positions 9 to 70 (REEKYGVAFY…PASYIHLKEA (62 aa)) constitute an SH3 domain. The region spanning 425-609 (RNDIYVTLVQ…DSFQISTLVC (185 aa)) is the C2 DOCK-type domain. The region spanning 1207–1617 (YKEIEREEMY…VEKQYGVRTM (411 aa)) is the DOCKER domain. The tract at residues 1613-1723 (GVRTMPSGLD…FKPADSSLQQ (111 aa)) is disordered. Residues 1639 to 1664 (PSSSRPLSVASVSSFSSDSTPSRPGS) are compositionally biased toward low complexity. Positions 1680–1694 (RSQDKLDKDDPDKEK) are enriched in basic and acidic residues. Residue Ser1681 is modified to Phosphoserine. The tract at residues 1687 to 1695 (KDDPDKEKK) is phosphoinositide-binding. Over residues 1695-1704 (KDKKKEKRNS) the composition is skewed to basic residues. Basic and acidic residues predominate over residues 1705–1716 (KHQEIFDKEFKP). Phosphoserine occurs at positions 1743, 1756, 1761, and 1764. 2 disordered regions span residues 1753–1778 (RRFS…AKLS) and 1801–1865 (PLPL…GIVQ). Low complexity predominate over residues 1756–1766 (SVSPASPSSQQ). Phosphothreonine is present on residues Thr1767 and Thr1772. The interval 1793–1819 (MDVADVPPPLPLKGNMADYGNLMENQD) is interaction with NCK2 second and third SH3 domain (minor). The SH3-binding; interaction with CRK signature appears at 1799–1805 (PPPLPLK). Residues 1820-1836 (MMVSPTSPPPPPPQRQQ) form an interaction with NCK2 third SH3 domain (major) region. Residues 1825-1851 (TSPPPPPPQRQQPPPLPSKTPPPPPPK) are compositionally biased toward pro residues. The segment at 1837–1852 (PPPLPSKTPPPPPPKT) is interaction with NCK2 (minor). Positions 1838–1843 (PPLPSK) match the SH3-binding; interaction with CRK motif. Position 1858 is a phosphoserine (Ser1858).

This sequence belongs to the DOCK family. As to quaternary structure, interacts with the SH3 domains of CRK and NCK2 via multiple sites. Interacts with nucleotide-free RAC1 via its DOCKER domain. Interacts with ELMO1, ELMO2 and probably ELMO3 via its SH3 domain. Interacts with RAC1. Interacts with ELMO1 and ADGRB1. Identified in a complex with AUTS2 and ELMO2.

It is found in the cytoplasm. It localises to the membrane. In terms of biological role, involved in cytoskeletal rearrangements required for phagocytosis of apoptotic cells and cell motility. Along with DOCK1, mediates CRK/CRKL regulation of epithelial and endothelial cell spreading and migration on type IV collagen. Functions as a guanine nucleotide exchange factor (GEF), which activates Rac Rho small GTPases by exchanging bound GDP for free GTP. Its GEF activity may be enhanced by ELMO1. This chain is Dedicator of cytokinesis protein 1 (Dock1), found in Mus musculus (Mouse).